The chain runs to 512 residues: GMP synthase [glutamine-hydrolyzing] (512 aa).

The Glutamine amidotransferase type-1 domain maps to 7-197; that stretch reads TIIVLDFGSQ…VFGVCGCSEG (191 aa). Cysteine 84 functions as the Nucleophile in the catalytic mechanism. Residues histidine 171 and glutamate 173 contribute to the active site. The GMPS ATP-PPase domain occupies 198-387; that stretch reads WNMENFIEVE…LGIPDEIVWR (190 aa). 225–231 serves as a coordination point for ATP; sequence SGGVDSS.

Homodimer.

It catalyses the reaction XMP + L-glutamine + ATP + H2O = GMP + L-glutamate + AMP + diphosphate + 2 H(+). It functions in the pathway purine metabolism; GMP biosynthesis; GMP from XMP (L-Gln route): step 1/1. In terms of biological role, catalyzes the synthesis of GMP from XMP. The protein is GMP synthase [glutamine-hydrolyzing] of Bacillus anthracis.